The chain runs to 206 residues: Large ribosomal subunit protein bL17 (206 aa).

The segment covering Glu130–Arg141 has biased composition (basic and acidic residues). Residues Glu130–Asn206 form a disordered region. 2 stretches are compositionally biased toward low complexity: residues Thr160–Gly181 and Asp189–Gly200.

It belongs to the bacterial ribosomal protein bL17 family. In terms of assembly, part of the 50S ribosomal subunit. Contacts protein L32.

The protein is Large ribosomal subunit protein bL17 of Frankia casuarinae (strain DSM 45818 / CECT 9043 / HFP020203 / CcI3).